The sequence spans 423 residues: DUF21 domain-containing protein At2g14520 (423 aa).

Residues 1 to 11 (MAVEYECCGTS) are Extracellular-facing. Residues 8–191 (CGTSFFIHIA…GKGGELTHDE (184 aa)) enclose the CNNM transmembrane domain. Residues 12 to 32 (FFIHIAVIVLLVLFAGLMSGL) form a helical membrane-spanning segment. The Cytoplasmic portion of the chain corresponds to 33 to 70 (TLGLMSMSLVDLEVLAKSGTPRDRIHAAKILPVVKNQH). A helical transmembrane segment spans residues 71 to 91 (LLLCTLLICNAAAMEALPIFL). Topologically, residues 92–94 (DAL) are extracellular. Residues 95 to 115 (VTAWGAILISVTLILLFGEII) traverse the membrane as a helical segment. Over 116-136 (PQSVCSRHGLAIGATVAPFVR) the chain is Cytoplasmic. Residues 137–157 (VLVWICLPVAWPISKLLDFLL) traverse the membrane as a helical segment. The Extracellular portion of the chain corresponds to 158–423 (GHGRVALFRR…DETDHHFEDL (266 aa)). Residues 210–271 (MTPISDTFVI…TINPDEEIQV (62 aa)) form the CBS 1 domain. Residues asparagine 273 and asparagine 322 are each glycosylated (N-linked (GlcNAc...) asparagine). CBS domains follow at residues 275-332 (TIRR…RVDV) and 356-415 (PNRA…IFDE).

The protein resides in the membrane. The protein is DUF21 domain-containing protein At2g14520 (CBSDUF3) of Arabidopsis thaliana (Mouse-ear cress).